A 358-amino-acid polypeptide reads, in one-letter code: Probable branched-chain-amino-acid aminotransferase (358 aa).

The residue at position 196 (Lys-196) is an N6-(pyridoxal phosphate)lysine.

This sequence belongs to the class-IV pyridoxal-phosphate-dependent aminotransferase family. It depends on pyridoxal 5'-phosphate as a cofactor.

The enzyme catalyses L-leucine + 2-oxoglutarate = 4-methyl-2-oxopentanoate + L-glutamate. It catalyses the reaction L-isoleucine + 2-oxoglutarate = (S)-3-methyl-2-oxopentanoate + L-glutamate. The catalysed reaction is L-valine + 2-oxoglutarate = 3-methyl-2-oxobutanoate + L-glutamate. It functions in the pathway amino-acid biosynthesis; L-isoleucine biosynthesis; L-isoleucine from 2-oxobutanoate: step 4/4. The protein operates within amino-acid biosynthesis; L-leucine biosynthesis; L-leucine from 3-methyl-2-oxobutanoate: step 4/4. Its pathway is amino-acid biosynthesis; L-valine biosynthesis; L-valine from pyruvate: step 4/4. In terms of biological role, acts on leucine, isoleucine and valine. This chain is Probable branched-chain-amino-acid aminotransferase (ilvE), found in Staphylococcus epidermidis (strain ATCC 12228 / FDA PCI 1200).